Reading from the N-terminus, the 122-residue chain is uncharacterized protein (122 aa).

The next 2 helical transmembrane spans lie at 34-54 and 91-111; these read IIFLTVGLLLFIAALALGVLV and FVLAAFGFVCMVASFLYFVSF.

Its subcellular location is the cell membrane. This is an uncharacterized protein from Mycoplasma pneumoniae (strain ATCC 29342 / M129 / Subtype 1) (Mycoplasmoides pneumoniae).